The following is a 479-amino-acid chain: Beta-monoglucosyldiacylglycerol synthase (479 aa).

4 consecutive transmembrane segments (helical) span residues 48–68, 363–383, 389–409, and 428–448; these read AAVMLMAIWTVVITLHYWVWG, FLLMQYLLPTAAVPDLLMALW, LLTPLSYLAIGFSCWGMYYGL, and LARTIGGTIYMFHWLIIMPAV.

It belongs to the glycosyltransferase 2 family. It depends on Mg(2+) as a cofactor.

It is found in the membrane. It carries out the reaction a 1,2-diacyl-sn-glycerol + UDP-alpha-D-glucose = a 1,2-diacyl-3-O-(beta-D-glucopyranosyl)-sn-glycerol + UDP + H(+). Functionally, glucosyltransferase involved in the biosynthesis of the non-bilayer-forming membrane lipid beta-monoglucosyldiacylglycerol which contributes to regulate the properties and stability of the membrane. Catalyzes the transfer of a glucosyl residue from UDP-Glc to diacylglycerol (DAG) acceptor to form the corresponding beta-glucosyl-DAG (1,2-diacyl-3-O-(beta-D-glucopyranosyl)-sn-glycerol). It can only use UDP-Glc as sugar donor. Two types of DAG (dipalmitoyl-DAG (DPDAG) and 1-oleoyl-2-palmitoyl-DAG (OPDAG)) can be used as sugar acceptors, but OPDAG is preferred. This is Beta-monoglucosyldiacylglycerol synthase from Synechocystis sp. (strain ATCC 27184 / PCC 6803 / Kazusa).